Consider the following 298-residue polypeptide: N-acetylmuramic acid 6-phosphate etherase (298 aa).

Residues 55–218 (ASKRYREGGR…STGVMIKQGK (164 aa)) form the SIS domain. Residue Glu83 is the Proton donor of the active site. The active site involves Glu114.

The protein belongs to the GCKR-like family. MurNAc-6-P etherase subfamily. As to quaternary structure, homodimer.

It catalyses the reaction N-acetyl-D-muramate 6-phosphate + H2O = N-acetyl-D-glucosamine 6-phosphate + (R)-lactate. Its pathway is amino-sugar metabolism; N-acetylmuramate degradation. Functionally, specifically catalyzes the cleavage of the D-lactyl ether substituent of MurNAc 6-phosphate, producing GlcNAc 6-phosphate and D-lactate. The chain is N-acetylmuramic acid 6-phosphate etherase from Lactobacillus johnsonii (strain CNCM I-12250 / La1 / NCC 533).